The chain runs to 436 residues: GTPase Der (436 aa).

EngA-type G domains lie at 4-167 (PTIA…PNEE) and 175-351 (IKFS…QSQN). Residues 10 to 17 (GRPNVGKS), 57 to 61 (DTGGI), 119 to 122 (NKVD), 181 to 188 (GRPNVGKS), 229 to 233 (DTAGM), and 294 to 297 (NKWD) each bind GTP. The 85-residue stretch at 352–436 (TRIPSAVLND…PIHLIARKRK (85 aa)) folds into the KH-like domain.

This sequence belongs to the TRAFAC class TrmE-Era-EngA-EngB-Septin-like GTPase superfamily. EngA (Der) GTPase family. Associates with the 50S ribosomal subunit.

In terms of biological role, GTPase that plays an essential role in the late steps of ribosome biogenesis. The chain is GTPase Der from Streptococcus gordonii (strain Challis / ATCC 35105 / BCRC 15272 / CH1 / DL1 / V288).